Consider the following 1178-residue polypeptide: Phytochrome B (1178 aa).

The span at 1 to 15 (MASGSRATPTRSPSS) shows a compositional bias: polar residues. Residues 1–58 (MASGSRATPTRSPSSARPEAPRHAHHHHHHHSQSSGGSTSRAGGGGGGGGGGGGTAAT) form a disordered region. Basic residues predominate over residues 23 to 32 (HAHHHHHHHS). Positions 42–55 (AGGGGGGGGGGGGT) are enriched in gly residues. One can recognise a GAF domain in the interval 267-449 (DIKLLCDTVV…AFGLQLNMEL (183 aa)). A phytochromobilin-binding site is contributed by Cys372. 2 PAS domains span residues 668-739 (VARE…LRGE) and 802-873 (DYKA…MVVI). The Histidine kinase domain maps to 950–1170 (YICQEIKNPL…LIVLELPQPR (221 aa)).

It belongs to the phytochrome family. In terms of assembly, homodimer. In terms of processing, contains one covalently linked phytochromobilin chromophore.

Functionally, regulatory photoreceptor which exists in two forms that are reversibly interconvertible by light: the Pr form that absorbs maximally in the red region of the spectrum and the Pfr form that absorbs maximally in the far-red region. Photoconversion of Pr to Pfr induces an array of morphogenic responses, whereas reconversion of Pfr to Pr cancels the induction of those responses. Pfr controls the expression of a number of nuclear genes including those encoding the small subunit of ribulose-bisphosphate carboxylase, chlorophyll A/B binding protein, protochlorophyllide reductase, rRNA, etc. It also controls the expression of its own gene(s) in a negative feedback fashion. The polypeptide is Phytochrome B (PHYB) (Sorghum bicolor (Sorghum)).